The sequence spans 266 residues: bZIP transcription factor 12 (266 aa).

The bZIP domain maps to 184-248 (AMQRQKRMIK…KELKEMVVPV (65 aa)). Residues 187–205 (RQKRMIKNRESAARSRERK) are basic motif. Positions 202–244 (RERKQAYIAELESLVTQLEEENAKMFKEQEEQHQKRLKELKEM) form a coiled coil. The interval 212–219 (LESLVTQL) is leucine-zipper.

It is found in the nucleus. Functionally, transcription activator that binds to the ABA-responsive elements (ABREs) in vitro. Involved in abiotic stress responses and abscisic acid (ABA) signaling. Involved in the signaling pathway that induces growth inhibition in response to D-allose. This Oryza sativa subsp. japonica (Rice) protein is bZIP transcription factor 12.